A 51-amino-acid polypeptide reads, in one-letter code: Insulin (51 aa).

Disulfide bonds link Cys7–Cys37, Cys19–Cys50, and Cys36–Cys41.

This sequence belongs to the insulin family. As to quaternary structure, heterodimer of a B chain and an A chain linked by two disulfide bonds.

Its subcellular location is the secreted. Its function is as follows. Insulin decreases blood glucose concentration. It increases cell permeability to monosaccharides, amino acids and fatty acids. It accelerates glycolysis, the pentose phosphate cycle, and glycogen synthesis in liver. This chain is Insulin (INS), found in Meleagris gallopavo (Wild turkey).